The chain runs to 176 residues: MTNIRKSHPLLKIVNDALIDLPAPSNISSWWNFGSLLGICLTIQILTGLFLAMHYTSDTTTAFNSVTHICRDVNYGWLLRYLHANGASMFFICLYLHVGRGLYYGSYTYTETWNMGIILLFAVMATAFMGYVLPWGQMSFWGATVITNLLSAIPYVGTDLVEWIWGGFSVDKATLT.

3 helical membrane-spanning segments follow: residues 33–53, 77–98, and 113–133; these read FGSL…FLAM, WLLR…YLHV, and WNMG…GYVL. Positions 83 and 97 each coordinate heme b.

It belongs to the cytochrome b family. The cytochrome bc1 complex contains 11 subunits: 3 respiratory subunits (MT-CYB, CYC1 and UQCRFS1), 2 core proteins (UQCRC1 and UQCRC2) and 6 low-molecular weight proteins (UQCRH/QCR6, UQCRB/QCR7, UQCRQ/QCR8, UQCR10/QCR9, UQCR11/QCR10 and a cleavage product of UQCRFS1). This cytochrome bc1 complex then forms a dimer. The cofactor is heme b.

Its subcellular location is the mitochondrion inner membrane. Functionally, component of the ubiquinol-cytochrome c reductase complex (complex III or cytochrome b-c1 complex) that is part of the mitochondrial respiratory chain. The b-c1 complex mediates electron transfer from ubiquinol to cytochrome c. Contributes to the generation of a proton gradient across the mitochondrial membrane that is then used for ATP synthesis. The protein is Cytochrome b (MT-CYB) of Tomopeas ravum (Blunt-eared bat).